The sequence spans 94 residues: Integration host factor subunit beta (94 aa).

The protein belongs to the bacterial histone-like protein family. Heterodimer of an alpha and a beta chain.

Its function is as follows. This protein is one of the two subunits of integration host factor, a specific DNA-binding protein that functions in genetic recombination as well as in transcriptional and translational control. This is Integration host factor subunit beta from Aeromonas hydrophila subsp. hydrophila (strain ATCC 7966 / DSM 30187 / BCRC 13018 / CCUG 14551 / JCM 1027 / KCTC 2358 / NCIMB 9240 / NCTC 8049).